The chain runs to 404 residues: NADH-quinone oxidoreductase subunit D (404 aa).

It belongs to the complex I 49 kDa subunit family. As to quaternary structure, NDH-1 is composed of 14 different subunits. Subunits NuoB, C, D, E, F, and G constitute the peripheral sector of the complex.

Its subcellular location is the cell inner membrane. The enzyme catalyses a quinone + NADH + 5 H(+)(in) = a quinol + NAD(+) + 4 H(+)(out). Functionally, NDH-1 shuttles electrons from NADH, via FMN and iron-sulfur (Fe-S) centers, to quinones in the respiratory chain. The immediate electron acceptor for the enzyme in this species is believed to be ubiquinone. Couples the redox reaction to proton translocation (for every two electrons transferred, four hydrogen ions are translocated across the cytoplasmic membrane), and thus conserves the redox energy in a proton gradient. In Dinoroseobacter shibae (strain DSM 16493 / NCIMB 14021 / DFL 12), this protein is NADH-quinone oxidoreductase subunit D.